We begin with the raw amino-acid sequence, 178 residues long: Small ribosomal subunit protein bS16 (178 aa).

Residues 78 to 178 (KLGITQWTAG…AAPAEGEEQA (101 aa)) are disordered. The segment covering 91–113 (KKGEPGQKAKERAEERAQREADR) has biased composition (basic and acidic residues). Over residues 114-127 (AAAAAEAAAAPAEE) the composition is skewed to low complexity. Residues 128–139 (APAEEAPAEEAA) are compositionally biased toward acidic residues. The segment covering 140–172 (AEAAPEAAAAEEAPAAEAAAEEAAPAAEEAAPA) has biased composition (low complexity).

The protein belongs to the bacterial ribosomal protein bS16 family.

This is Small ribosomal subunit protein bS16 from Phenylobacterium zucineum (strain HLK1).